We begin with the raw amino-acid sequence, 201 residues long: Histidine biosynthesis bifunctional protein HisIE (201 aa).

The interval 1 to 114 (MLTAQQIEKL…FAPAQTEWGF (114 aa)) is phosphoribosyl-AMP cyclohydrolase. The phosphoribosyl-ATP pyrophosphohydrolase stretch occupies residues 115 to 201 (LYQLEKLLAS…SCVIRRLRER (87 aa)).

The protein in the N-terminal section; belongs to the PRA-CH family. In the C-terminal section; belongs to the PRA-PH family.

It is found in the cytoplasm. It carries out the reaction 1-(5-phospho-beta-D-ribosyl)-ATP + H2O = 1-(5-phospho-beta-D-ribosyl)-5'-AMP + diphosphate + H(+). The enzyme catalyses 1-(5-phospho-beta-D-ribosyl)-5'-AMP + H2O = 1-(5-phospho-beta-D-ribosyl)-5-[(5-phospho-beta-D-ribosylamino)methylideneamino]imidazole-4-carboxamide. The protein operates within amino-acid biosynthesis; L-histidine biosynthesis; L-histidine from 5-phospho-alpha-D-ribose 1-diphosphate: step 2/9. It functions in the pathway amino-acid biosynthesis; L-histidine biosynthesis; L-histidine from 5-phospho-alpha-D-ribose 1-diphosphate: step 3/9. In Photorhabdus laumondii subsp. laumondii (strain DSM 15139 / CIP 105565 / TT01) (Photorhabdus luminescens subsp. laumondii), this protein is Histidine biosynthesis bifunctional protein HisIE.